Reading from the N-terminus, the 292-residue chain is MVKVMLGIISVTLIWGYTWVAMKVGIHDIPPLLFSGLRLFIGAVPLFLILFIQRKKLSIQKEHLKSYIIMSLLMGLGYMGILTYGMQFVDSGKTSVLVYTMPIFVTVISHFSLNEKMNVYKTMGLVCGLFGLLFIFGKEMLNIDQSALFGELCVLVAALSWGIANVFSKLQFKHIDIIHMNAWHLMMGAVMLLVFSFIFEAVPSAEWTYQAVWSLLFNGLLSTGFTFVVWFWVLNQIQASKASMALMFVPVLALFFGWLQLHEQITINIILGALLICCGIFMNTFTFSRRKV.

The next 10 membrane-spanning stretches (helical) occupy residues 6-26, 32-52, 68-88, 94-114, 123-143, 147-167, 182-202, 214-234, 242-262, and 265-285; these read LGIISVTLIWGYTWVAMKVGI, LLFSGLRLFIGAVPLFLILFI, IIMSLLMGLGYMGILTYGMQF, TSVLVYTMPIFVTVISHFSLN, MGLVCGLFGLLFIFGKEMLNI, ALFGELCVLVAALSWGIANVF, AWHLMMGAVMLLVFSFIFEAV, SLLFNGLLSTGFTFVVWFWVL, ASMALMFVPVLALFFGWLQLH, and ITINIILGALLICCGIFMNTF. 2 EamA domains span residues 13 to 137 and 159 to 285; these read LIWG…FIFG and LSWG…MNTF.

The protein belongs to the EamA transporter family.

The protein resides in the cell membrane. This is an uncharacterized protein from Bacillus subtilis (strain 168).